The following is an 853-amino-acid chain: MASKTKTSLSETTTTTTPTGKSSPATPRIAKRTVNKSETSNNNSPSTTTPHSRLSLDRSSPNSKSSVERRSPKLPTPPEKSQARVAAVKGTESPQTTTRLSQIKEDLKKANERISSLEKDKAKALDELKQAKKEAEQVTLKLDDALKAQKHVEENSEIEKFQAVEAGIEAVQNNEEELKKELETVKNQHASDSAALVAVRQELEKINEELAAAFDAKSKALSQAEDASKTAEIHAEKVDILSSELTRLKALLDSTREKTAISDNEMVAKLEDEIVVLKRDLESARGFEAEVKEKEMIVEKLNVDLEAAKMAESNAHSLSNEWQSKAKELEEQLEEANKLERSASVSLESVMKQLEGSNDKLHDTETEITDLKERIVTLETTVAKQKEDLEVSEQRLGSVEEEVSKNEKEVEKLKSELETVKEEKNRALKKEQDATSRVQRLSEEKSKLLSDLESSKEEEEKSKKAMESLASALHEVSSEGRELKEKLLSQGDHEYETQIDDLKLVIKATNEKYENMLDEARHEIDVLVSAVEQTKKHFESSKKDWEMKEANLVNYVKKMEEDVASMGKEMNRLDNLLKRTEEEADAAWKKEAQTKDSLKEVEEEIVYLQETLGEAKAESMKLKENLLDKETEFQNVIHENEDLKAKEDVSLKKIEELSKLLEEAILAKKQPEEENGELSESEKDYDLLPKVVEFSSENGHRSVEEKSAKVETLDHEPPQEQISNGNSNGNGMEEKEVNGKPEVETEKKEKKDESQDDDKDDSVEVIFKMWESCQIEKKEAFPDKKSELESQEEEEDSSKIDESDKTSTENIDETGNALTAEDQLTMEKKIKKKKTLLGKVGNLLKKKAPVNQK.

Low complexity-rich tracts occupy residues 1 to 27 (MASKTKTSLSETTTTTTPTGKSSPATP) and 36 to 49 (KSETSNNNSPSTTT). Residues 1 to 84 (MASKTKTSLS…PTPPEKSQAR (84 aa)) constitute a chloroplast transit peptide. 4 disordered regions span residues 1 to 106 (MASK…IKED), 386 to 465 (KEDL…SKKA), 666 to 765 (LAKK…SVEV), and 778 to 820 (KEAF…ALTA). The segment covering 92 to 101 (ESPQTTTRLS) has biased composition (polar residues). The stretch at 94 to 670 (PQTTTRLSQI…LEEAILAKKQ (577 aa)) forms a coiled coil. 3 stretches are compositionally biased toward basic and acidic residues: residues 402–465 (EVSK…SKKA), 698–718 (NGHRSVEEKSAKVETLDHEPP), and 732–753 (MEEKEVNGKPEVETEKKEKKDE). Over residues 754-763 (SQDDDKDDSV) the composition is skewed to acidic residues. The span at 778–788 (KEAFPDKKSEL) shows a compositional bias: basic and acidic residues. Ser-790 is modified (phosphoserine). The segment covering 797-807 (SSKIDESDKTS) has biased composition (basic and acidic residues).

Belongs to the WEB family.

Its subcellular location is the plastid. The protein resides in the chloroplast. This is WEB family protein At5g16730, chloroplastic from Arabidopsis thaliana (Mouse-ear cress).